We begin with the raw amino-acid sequence, 408 residues long: Serine/threonine transporter SstT (408 aa).

Helical transmembrane passes span 11-31, 43-63, 81-101, 141-161, 192-212, 216-236, 298-318, 330-350, and 357-377; these read LANG…VILA, FLGS…VFIL, PIVV…VVLS, ALMT…GLAL, IGIF…AIAG, LLAV…PLIV, MGGA…TLGI, VVAA…LLLI, and FGIS…IGVI.

It belongs to the dicarboxylate/amino acid:cation symporter (DAACS) (TC 2.A.23) family.

Its subcellular location is the cell inner membrane. It catalyses the reaction L-serine(in) + Na(+)(in) = L-serine(out) + Na(+)(out). The catalysed reaction is L-threonine(in) + Na(+)(in) = L-threonine(out) + Na(+)(out). In terms of biological role, involved in the import of serine and threonine into the cell, with the concomitant import of sodium (symport system). This Shewanella sp. (strain W3-18-1) protein is Serine/threonine transporter SstT.